The chain runs to 202 residues: Glycerol-3-phosphate acyltransferase (202 aa).

Helical transmembrane passes span 11–31 (LLLFWGGIGYLLGSVPFGMVI), 60–80 (AAAAATLLLDGGKGAAAVLLA), 88–108 (AAQLAGLLAFLGHCFPVWLGF), 117–137 (FLGLMLALAWPVGIACCLTWL), and 162–182 (LLLGAPQAAVLSALLALVILW).

Belongs to the PlsY family. Probably interacts with PlsX.

The protein localises to the cell inner membrane. It carries out the reaction an acyl phosphate + sn-glycerol 3-phosphate = a 1-acyl-sn-glycero-3-phosphate + phosphate. It functions in the pathway lipid metabolism; phospholipid metabolism. Catalyzes the transfer of an acyl group from acyl-phosphate (acyl-PO(4)) to glycerol-3-phosphate (G3P) to form lysophosphatidic acid (LPA). This enzyme utilizes acyl-phosphate as fatty acyl donor, but not acyl-CoA or acyl-ACP. The protein is Glycerol-3-phosphate acyltransferase of Ruegeria sp. (strain TM1040) (Silicibacter sp.).